The primary structure comprises 200 residues: Glycerol-3-phosphate acyltransferase (200 aa).

Transmembrane regions (helical) follow at residues 6–26 (LTLG…AVLV), 56–76 (SAAM…YIAF), 82–102 (QVAL…PIFF), 118–138 (APIG…MVLI), and 141–161 (YSSL…WFLD).

This sequence belongs to the PlsY family. Probably interacts with PlsX.

The protein localises to the cell inner membrane. The catalysed reaction is an acyl phosphate + sn-glycerol 3-phosphate = a 1-acyl-sn-glycero-3-phosphate + phosphate. The protein operates within lipid metabolism; phospholipid metabolism. Functionally, catalyzes the transfer of an acyl group from acyl-phosphate (acyl-PO(4)) to glycerol-3-phosphate (G3P) to form lysophosphatidic acid (LPA). This enzyme utilizes acyl-phosphate as fatty acyl donor, but not acyl-CoA or acyl-ACP. The sequence is that of Glycerol-3-phosphate acyltransferase from Shewanella sediminis (strain HAW-EB3).